Reading from the N-terminus, the 252-residue chain is Serine/threonine phosphatase stp (252 aa).

Basic and acidic residues predominate over residues 1-18 (MHAEFRTDRGRIRHHNED). Residues 1–23 (MHAEFRTDRGRIRHHNEDNGGVF) form a disordered region. One can recognise a PPM-type phosphatase domain in the interval 2–242 (HAEFRTDRGR…DNITVLLVER (241 aa)). Aspartate 36, glycine 37, aspartate 194, and aspartate 233 together coordinate Mn(2+).

The protein belongs to the PP2C family. Mn(2+) serves as cofactor.

It is found in the cytoplasm. It localises to the membrane. It catalyses the reaction O-phospho-L-seryl-[protein] + H2O = L-seryl-[protein] + phosphate. The catalysed reaction is O-phospho-L-threonyl-[protein] + H2O = L-threonyl-[protein] + phosphate. Its activity is regulated as follows. Activity not affected by inhibitors of phosphatases of the PPP family such as okadaic acid and cypermethrin, or by inhibitors of phosphatases of the PTP family such as sodium orthovanadate. Its function is as follows. Protein phosphatase that dephosphorylates EF-Tu. This is Serine/threonine phosphatase stp (stp) from Listeria monocytogenes serovar 1/2a (strain ATCC BAA-679 / EGD-e).